The primary structure comprises 262 residues: Ribosome-recycling factor, mitochondrial (262 aa).

A mitochondrion-targeting transit peptide spans 1–55 (MALGLKCFRMVHPTFRNYLAASIRPVSEVTLKTVHERQHGHRQYMAYSAVPVRHF).

This sequence belongs to the RRF family.

It is found in the mitochondrion. In terms of biological role, responsible for the disassembly of ribosomes from messenger RNA at the termination of mitochondrial protein biosynthesis. Acts in collaboration with GFM2. Promotes mitochondrial ribosome recycling by dissolution of intersubunit contacts. The protein is Ribosome-recycling factor, mitochondrial of Homo sapiens (Human).